Reading from the N-terminus, the 199-residue chain is Probable GTP-binding protein EngB (199 aa).

In terms of domain architecture, EngB-type G spans 28–199 (DLPEIALAGR…DSWDAILEQV (172 aa)). Residues 36–43 (GRSNVGKS), 63–67 (GKTQL), 81–84 (DVPG), 148–151 (TKAD), and 180–182 (FSS) each bind GTP. Residues serine 43 and threonine 65 each coordinate Mg(2+).

It belongs to the TRAFAC class TrmE-Era-EngA-EngB-Septin-like GTPase superfamily. EngB GTPase family. Mg(2+) serves as cofactor.

In terms of biological role, necessary for normal cell division and for the maintenance of normal septation. This Streptococcus pyogenes serotype M3 (strain SSI-1) protein is Probable GTP-binding protein EngB.